We begin with the raw amino-acid sequence, 61 residues long: Small ribosomal subunit protein uS14 (61 aa).

Residues Cys24, Cys27, Cys40, and Cys43 each contribute to the Zn(2+) site.

The protein belongs to the universal ribosomal protein uS14 family. Zinc-binding uS14 subfamily. As to quaternary structure, part of the 30S ribosomal subunit. Contacts proteins S3 and S10. The cofactor is Zn(2+).

In terms of biological role, binds 16S rRNA, required for the assembly of 30S particles and may also be responsible for determining the conformation of the 16S rRNA at the A site. This is Small ribosomal subunit protein uS14 from Frankia alni (strain DSM 45986 / CECT 9034 / ACN14a).